The primary structure comprises 207 residues: Outer-membrane lipoprotein carrier protein (207 aa).

The first 21 residues, 1-21 (MRAIRMLLVSALALGTVTAYA), serve as a signal peptide directing secretion.

The protein belongs to the LolA family. Monomer.

It localises to the periplasm. Participates in the translocation of lipoproteins from the inner membrane to the outer membrane. Only forms a complex with a lipoprotein if the residue after the N-terminal Cys is not an aspartate (The Asp acts as a targeting signal to indicate that the lipoprotein should stay in the inner membrane). The protein is Outer-membrane lipoprotein carrier protein of Pseudomonas putida (strain GB-1).